Reading from the N-terminus, the 367-residue chain is Phosphoribosylaminoimidazole-succinocarboxamide synthase (367 aa).

It belongs to the SAICAR synthetase family.

The catalysed reaction is 5-amino-1-(5-phospho-D-ribosyl)imidazole-4-carboxylate + L-aspartate + ATP = (2S)-2-[5-amino-1-(5-phospho-beta-D-ribosyl)imidazole-4-carboxamido]succinate + ADP + phosphate + 2 H(+). The protein operates within purine metabolism; IMP biosynthesis via de novo pathway; 5-amino-1-(5-phospho-D-ribosyl)imidazole-4-carboxamide from 5-amino-1-(5-phospho-D-ribosyl)imidazole-4-carboxylate: step 1/2. The chain is Phosphoribosylaminoimidazole-succinocarboxamide synthase from Shewanella piezotolerans (strain WP3 / JCM 13877).